The sequence spans 342 residues: MRSIKTVHVISAHAEGEVGDVIVGGVKPPPGETIWEQSRFIARDETLRNFVLNEPRGGVFRHVNLLVPPKHPDADAAFIIMEPEDTPPMSGSNSICVSTVLLDGGIVPMQEPETHMLLEAPGGLVKVRAECRNGKAERIFVQNLPSFAAKLDAELEVEGLGKLKVDTAYGGDSFVIVDAEAMGFSLKPEEAHEIARLGVRITNAANKALGFDHPENPDWRHFSFCLFAGKVERTAEGLRAGAAVAIQPGKVDRSPTGTALSARMAVLHARGEMKEGETLTAVSLIGSTFTGRILGTTTVGDRPAILPEISGRGWITGIHQHMLDPSDPWPEGYRLTDTWGAR.

The Proton acceptor role is filled by Ser90. Substrate-binding positions include 91–92 (GS), Asp252, and 257–258 (GT).

This sequence belongs to the proline racemase family.

The enzyme catalyses trans-3-hydroxy-L-proline = 1-pyrroline-2-carboxylate + H2O. It catalyses the reaction trans-4-hydroxy-L-proline = cis-4-hydroxy-D-proline. Functionally, catalyzes the dehydration of trans-3-hydroxy-L-proline (t3LHyp) to Delta(1)-pyrroline-2-carboxylate (Pyr2C). Can also catalyze the epimerization of trans-4-hydroxy-L-proline (t4LHyp) to cis-4-hydroxy-D-proline (c4DHyp), albeit with 30-fold lower efficiency. Is likely involved in both degradation pathways that convert t3LHyp to L-proline and t4LHyp to alpha-ketoglutarate, which would allow A.tumefaciens to grow on t3LHyp or t4LHyp as a sole carbon source. Displays no proline racemase activity. This Agrobacterium fabrum (strain C58 / ATCC 33970) (Agrobacterium tumefaciens (strain C58)) protein is Trans-3-hydroxy-L-proline dehydratase.